A 489-amino-acid polypeptide reads, in one-letter code: Betaine aldehyde dehydrogenase (489 aa).

Thr-26 and Asp-93 together coordinate K(+). Residue 150–152 participates in NAD(+) binding; sequence GAW. Residue Lys-162 is the Charge relay system of the active site. 176 to 179 contacts NAD(+); it reads KPSE. Position 180 (Val-180) interacts with K(+). 229–232 serves as a coordination point for NAD(+); sequence GVET. K(+) is bound at residue Leu-245. The active-site Proton acceptor is Glu-251. Residues Gly-253, Cys-285, and Glu-386 each contribute to the NAD(+) site. Residue Cys-285 is the Nucleophile of the active site. Position 285 is a cysteine sulfenic acid (-SOH) (Cys-285). Residues Lys-456 and Gly-459 each coordinate K(+). Glu-463 acts as the Charge relay system in catalysis.

This sequence belongs to the aldehyde dehydrogenase family. As to quaternary structure, dimer of dimers. The cofactor is K(+).

The catalysed reaction is betaine aldehyde + NAD(+) + H2O = glycine betaine + NADH + 2 H(+). The protein operates within amine and polyamine biosynthesis; betaine biosynthesis via choline pathway; betaine from betaine aldehyde: step 1/1. Functionally, involved in the biosynthesis of the osmoprotectant glycine betaine. Catalyzes the irreversible oxidation of betaine aldehyde to the corresponding acid. In Burkholderia ambifaria (strain ATCC BAA-244 / DSM 16087 / CCUG 44356 / LMG 19182 / AMMD) (Burkholderia cepacia (strain AMMD)), this protein is Betaine aldehyde dehydrogenase.